The sequence spans 209 residues: Putative cardiolipin synthase (209 aa).

A run of 4 helical transmembrane segments spans residues 27–47 (AFVY…ILVF), 82–102 (VTVP…VLTL), 126–146 (VTYV…TILL), and 157–177 (LLAC…WAFV).

It belongs to the CDP-alcohol phosphatidyltransferase class-I family.

It localises to the cell membrane. The catalysed reaction is a CDP-1,2-diacyl-sn-glycerol + a 1,2-diacyl-sn-glycero-3-phospho-(1'-sn-glycerol) = a cardiolipin + CMP + H(+). It functions in the pathway lipid metabolism; phospholipid metabolism. Its function is as follows. May catalyze the biosynthesis of cardiolipin from phosphatidylglycerol (PG) and CDP-diacylglycerol. This is Putative cardiolipin synthase from Mycobacterium bovis (strain ATCC BAA-935 / AF2122/97).